A 406-amino-acid chain; its full sequence is Imidazolonepropionase (406 aa).

Fe(3+) is bound by residues His67 and His69. Positions 67 and 69 each coordinate Zn(2+). Positions 76, 139, and 172 each coordinate 4-imidazolone-5-propanoate. Tyr139 is an N-formimidoyl-L-glutamate binding site. His237 contributes to the Fe(3+) binding site. A Zn(2+)-binding site is contributed by His237. Position 240 (Gln240) interacts with 4-imidazolone-5-propanoate. Residue Asp312 coordinates Fe(3+). Asp312 serves as a coordination point for Zn(2+). Residues Asn314 and Gly316 each coordinate N-formimidoyl-L-glutamate. Thr317 is a 4-imidazolone-5-propanoate binding site.

Belongs to the metallo-dependent hydrolases superfamily. HutI family. Zn(2+) is required as a cofactor. The cofactor is Fe(3+).

The protein resides in the cytoplasm. It catalyses the reaction 4-imidazolone-5-propanoate + H2O = N-formimidoyl-L-glutamate. It participates in amino-acid degradation; L-histidine degradation into L-glutamate; N-formimidoyl-L-glutamate from L-histidine: step 3/3. In terms of biological role, catalyzes the hydrolytic cleavage of the carbon-nitrogen bond in imidazolone-5-propanoate to yield N-formimidoyl-L-glutamate. It is the third step in the universal histidine degradation pathway. This Paraburkholderia phymatum (strain DSM 17167 / CIP 108236 / LMG 21445 / STM815) (Burkholderia phymatum) protein is Imidazolonepropionase.